The primary structure comprises 173 residues: Photosystem I assembly protein Ycf3 (173 aa).

TPR repeat units follow at residues 35–68 (AYVYYRDGLSAQNDGDYAEALENYDEALKLETDP), 72–105 (GETLKNMAIIYMSNGEEERAIETYQKALDENPKQ), and 120–153 (GRIAEESGQQDDADRWFDQAADVWTQAVRLNPGG).

Belongs to the Ycf3 family.

It localises to the cellular thylakoid membrane. Essential for the assembly of the photosystem I (PSI) complex. May act as a chaperone-like factor to guide the assembly of the PSI subunits. This is Photosystem I assembly protein Ycf3 from Synechococcus sp. (strain CC9902).